The primary structure comprises 318 residues: uncharacterized protein (318 aa).

This is an uncharacterized protein from Ostreid herpesvirus 1 (isolate France) (OsHV-1).